Reading from the N-terminus, the 177-residue chain is Large ribosomal subunit protein uL6 (177 aa).

It belongs to the universal ribosomal protein uL6 family. Part of the 50S ribosomal subunit.

This protein binds to the 23S rRNA, and is important in its secondary structure. It is located near the subunit interface in the base of the L7/L12 stalk, and near the tRNA binding site of the peptidyltransferase center. The protein is Large ribosomal subunit protein uL6 of Tolumonas auensis (strain DSM 9187 / NBRC 110442 / TA 4).